Here is a 331-residue protein sequence, read N- to C-terminus: C4-dicarboxylate-binding periplasmic protein DctP (331 aa).

The N-terminal stretch at 1-23 (MLKHTAKALVCALSLTVAGIVQA) is a signal peptide.

It belongs to the bacterial solute-binding protein 7 family. The complex comprises the extracytoplasmic solute receptor protein DctP, and the two transmembrane proteins DctQ and DctM.

The protein resides in the periplasm. Part of the tripartite ATP-independent periplasmic (TRAP) transport system DctPQM involved in C4-dicarboxylates uptake. This Pseudomonas aeruginosa (strain ATCC 15692 / DSM 22644 / CIP 104116 / JCM 14847 / LMG 12228 / 1C / PRS 101 / PAO1) protein is C4-dicarboxylate-binding periplasmic protein DctP.